The chain runs to 680 residues: Zinc finger protein 334 (680 aa).

The region spanning 10–81 (VSFQDLTVNF…EEFSNQNYPD (72 aa)) is the KRAB domain. 14 consecutive C2H2-type zinc fingers follow at residues 237–259 (NECN…QRIH), 265–287 (YVCS…RRIH), 293–315 (YECS…QKIH), 321–343 (YECN…FRSH), 349–371 (YECK…QRTH), 377–399 (NECK…QRIH), 405–427 (YECS…RRSH), 433–455 (YECS…QITH), 461–483 (YECN…QRTH), 544–566 (YECN…QRTH), 572–594 (YECN…QRTH), 600–622 (YECN…RRIH), 628–650 (YECN…QKIH), and 656–678 (YECN…QKSH).

It belongs to the krueppel C2H2-type zinc-finger protein family.

The protein localises to the nucleus. Functionally, may be involved in transcriptional regulation. In Homo sapiens (Human), this protein is Zinc finger protein 334 (ZNF334).